A 206-amino-acid polypeptide reads, in one-letter code: Protein-methionine-sulfoxide reductase heme-binding subunit MsrQ (206 aa).

5 helical membrane-spanning segments follow: residues Ile13 to Gly33, Leu79 to Glu99, Pro116 to Thr136, Trp147 to Trp167, and Val169 to Leu189.

Belongs to the MsrQ family. In terms of assembly, heterodimer of a catalytic subunit (MsrP) and a heme-binding subunit (MsrQ). FMN serves as cofactor. Heme b is required as a cofactor.

It is found in the cell inner membrane. In terms of biological role, part of the MsrPQ system that repairs oxidized periplasmic proteins containing methionine sulfoxide residues (Met-O), using respiratory chain electrons. Thus protects these proteins from oxidative-stress damage caused by reactive species of oxygen and chlorine generated by the host defense mechanisms. MsrPQ is essential for the maintenance of envelope integrity under bleach stress, rescuing a wide series of structurally unrelated periplasmic proteins from methionine oxidation. MsrQ provides electrons for reduction to the reductase catalytic subunit MsrP, using the quinone pool of the respiratory chain. The chain is Protein-methionine-sulfoxide reductase heme-binding subunit MsrQ from Yersinia pestis bv. Antiqua (strain Antiqua).